The sequence spans 409 residues: Tryptophan synthase beta chain (409 aa).

Position 95 is an N6-(pyridoxal phosphate)lysine (Lys-95).

It belongs to the TrpB family. Tetramer of two alpha and two beta chains. Pyridoxal 5'-phosphate serves as cofactor.

It carries out the reaction (1S,2R)-1-C-(indol-3-yl)glycerol 3-phosphate + L-serine = D-glyceraldehyde 3-phosphate + L-tryptophan + H2O. Its pathway is amino-acid biosynthesis; L-tryptophan biosynthesis; L-tryptophan from chorismate: step 5/5. Its function is as follows. The beta subunit is responsible for the synthesis of L-tryptophan from indole and L-serine. This Pseudomonas savastanoi pv. phaseolicola (Pseudomonas syringae pv. phaseolicola) protein is Tryptophan synthase beta chain.